Consider the following 120-residue polypeptide: Aspartate 1-decarboxylase (120 aa).

Serine 25 functions as the Schiff-base intermediate with substrate; via pyruvic acid in the catalytic mechanism. Position 25 is a pyruvic acid (Ser) (serine 25). Threonine 57 is a binding site for substrate. Tyrosine 58 functions as the Proton donor in the catalytic mechanism. 73 to 75 (GAA) lines the substrate pocket.

Belongs to the PanD family. In terms of assembly, heterooctamer of four alpha and four beta subunits. Pyruvate is required as a cofactor. Is synthesized initially as an inactive proenzyme, which is activated by self-cleavage at a specific serine bond to produce a beta-subunit with a hydroxyl group at its C-terminus and an alpha-subunit with a pyruvoyl group at its N-terminus.

The protein localises to the cytoplasm. The enzyme catalyses L-aspartate + H(+) = beta-alanine + CO2. It participates in cofactor biosynthesis; (R)-pantothenate biosynthesis; beta-alanine from L-aspartate: step 1/1. In terms of biological role, catalyzes the pyruvoyl-dependent decarboxylation of aspartate to produce beta-alanine. This chain is Aspartate 1-decarboxylase, found in Cupriavidus necator (strain ATCC 17699 / DSM 428 / KCTC 22496 / NCIMB 10442 / H16 / Stanier 337) (Ralstonia eutropha).